The primary structure comprises 298 residues: Small ribosomal subunit protein uS3 (298 aa).

A KH type-2 domain is found at 38 to 106; the sequence is IRRRLSRGME…QVQLNILEVK (69 aa). The tract at residues 212-298 is disordered; the sequence is KQKQQESEVR…EPRADEKTEG (87 aa). Basic and acidic residues predominate over residues 214-237; the sequence is KQQESEVRPPRGERGERGGRPERG. Residues 265 to 278 are compositionally biased toward polar residues; the sequence is GSAQSPEQAQTSGD.

The protein belongs to the universal ribosomal protein uS3 family. Part of the 30S ribosomal subunit. Forms a tight complex with proteins S10 and S14.

Binds the lower part of the 30S subunit head. Binds mRNA in the 70S ribosome, positioning it for translation. This chain is Small ribosomal subunit protein uS3, found in Saccharopolyspora erythraea (strain ATCC 11635 / DSM 40517 / JCM 4748 / NBRC 13426 / NCIMB 8594 / NRRL 2338).